The primary structure comprises 644 residues: Exoribonuclease 2 (644 aa).

An RNB domain is found at Arg189–Lys516. In terms of domain architecture, S1 motif spans Gly561 to Val643.

Belongs to the RNR ribonuclease family. RNase II subfamily.

It is found in the cytoplasm. It carries out the reaction Exonucleolytic cleavage in the 3'- to 5'-direction to yield nucleoside 5'-phosphates.. Involved in mRNA degradation. Hydrolyzes single-stranded polyribonucleotides processively in the 3' to 5' direction. This chain is Exoribonuclease 2, found in Shigella flexneri.